Consider the following 490-residue polypeptide: Betaine aldehyde dehydrogenase (490 aa).

K(+) contacts are provided by Ile27 and Asp93. 150–152 (GAW) lines the NAD(+) pocket. The active-site Charge relay system is Lys162. 176-179 (KPSE) contacts NAD(+). Val180 serves as a coordination point for K(+). Residue 230–233 (GTDT) coordinates NAD(+). K(+) is bound at residue Leu246. Residue Glu252 is the Proton acceptor of the active site. 3 residues coordinate NAD(+): Gly254, Cys286, and Glu387. Catalysis depends on Cys286, which acts as the Nucleophile. Cys286 carries the cysteine sulfenic acid (-SOH) modification. Residues Lys457 and Gly460 each coordinate K(+). Glu464 functions as the Charge relay system in the catalytic mechanism.

Belongs to the aldehyde dehydrogenase family. In terms of assembly, dimer of dimers. Requires K(+) as cofactor.

It carries out the reaction betaine aldehyde + NAD(+) + H2O = glycine betaine + NADH + 2 H(+). It participates in amine and polyamine biosynthesis; betaine biosynthesis via choline pathway; betaine from betaine aldehyde: step 1/1. Functionally, involved in the biosynthesis of the osmoprotectant glycine betaine. Catalyzes the irreversible oxidation of betaine aldehyde to the corresponding acid. This Pseudomonas fluorescens (strain ATCC BAA-477 / NRRL B-23932 / Pf-5) protein is Betaine aldehyde dehydrogenase.